The primary structure comprises 848 residues: DNA mismatch repair protein MutS (848 aa).

605 to 612 (GPNMAGKS) is an ATP binding site.

This sequence belongs to the DNA mismatch repair MutS family.

Its function is as follows. This protein is involved in the repair of mismatches in DNA. It is possible that it carries out the mismatch recognition step. This protein has a weak ATPase activity. This chain is DNA mismatch repair protein MutS, found in Leptospira borgpetersenii serovar Hardjo-bovis (strain JB197).